A 200-amino-acid chain; its full sequence is Probable nicotinate-nucleotide adenylyltransferase (200 aa).

It belongs to the NadD family.

It catalyses the reaction nicotinate beta-D-ribonucleotide + ATP + H(+) = deamido-NAD(+) + diphosphate. It functions in the pathway cofactor biosynthesis; NAD(+) biosynthesis; deamido-NAD(+) from nicotinate D-ribonucleotide: step 1/1. Catalyzes the reversible adenylation of nicotinate mononucleotide (NaMN) to nicotinic acid adenine dinucleotide (NaAD). In Clostridium botulinum (strain Alaska E43 / Type E3), this protein is Probable nicotinate-nucleotide adenylyltransferase.